The primary structure comprises 101 residues: NADH-quinone oxidoreductase subunit K (101 aa).

3 helical membrane passes run 2–22, 28–48, and 62–82; these read TLSA…YGAL, VIVL…FVAF, and FALF…AALI.

It belongs to the complex I subunit 4L family. In terms of assembly, NDH-1 is composed of 14 different subunits. Subunits NuoA, H, J, K, L, M, N constitute the membrane sector of the complex.

It is found in the cell membrane. The catalysed reaction is a quinone + NADH + 5 H(+)(in) = a quinol + NAD(+) + 4 H(+)(out). NDH-1 shuttles electrons from NADH, via FMN and iron-sulfur (Fe-S) centers, to quinones in the respiratory chain. The immediate electron acceptor for the enzyme in this species is believed to be a menaquinone. Couples the redox reaction to proton translocation (for every two electrons transferred, four hydrogen ions are translocated across the cytoplasmic membrane), and thus conserves the redox energy in a proton gradient. The sequence is that of NADH-quinone oxidoreductase subunit K from Geobacillus kaustophilus (strain HTA426).